The chain runs to 707 residues: Ribosomal RNA large subunit methyltransferase K/L (707 aa).

Residues 44 to 155 (VIYNLCLWSR…NDILTVSFDL (112 aa)) form the THUMP domain.

This sequence belongs to the methyltransferase superfamily. RlmKL family.

The protein localises to the cytoplasm. It catalyses the reaction guanosine(2445) in 23S rRNA + S-adenosyl-L-methionine = N(2)-methylguanosine(2445) in 23S rRNA + S-adenosyl-L-homocysteine + H(+). The catalysed reaction is guanosine(2069) in 23S rRNA + S-adenosyl-L-methionine = N(2)-methylguanosine(2069) in 23S rRNA + S-adenosyl-L-homocysteine + H(+). Its function is as follows. Specifically methylates the guanine in position 2445 (m2G2445) and the guanine in position 2069 (m7G2069) of 23S rRNA. This is Ribosomal RNA large subunit methyltransferase K/L from Legionella pneumophila subsp. pneumophila (strain Philadelphia 1 / ATCC 33152 / DSM 7513).